Consider the following 270-residue polypeptide: ATP synthase subunit a (270 aa).

Helical transmembrane passes span 37 to 57, 98 to 118, 143 to 163, 208 to 228, and 239 to 259; these read NVHI…LGVF, IAPL…MDLV, DVNI…YYSI, LFGN…MLPW, and AIFH…LTIV.

It belongs to the ATPase A chain family. F-type ATPases have 2 components, CF(1) - the catalytic core - and CF(0) - the membrane proton channel. CF(1) has five subunits: alpha(3), beta(3), gamma(1), delta(1), epsilon(1). CF(0) has three main subunits: a(1), b(2) and c(9-12). The alpha and beta chains form an alternating ring which encloses part of the gamma chain. CF(1) is attached to CF(0) by a central stalk formed by the gamma and epsilon chains, while a peripheral stalk is formed by the delta and b chains.

It localises to the cell inner membrane. In terms of biological role, key component of the proton channel; it plays a direct role in the translocation of protons across the membrane. The polypeptide is ATP synthase subunit a (Vibrio cholerae serotype O1 (strain ATCC 39315 / El Tor Inaba N16961)).